Here is a 110-residue protein sequence, read N- to C-terminus: DNA-directed RNA polymerase subunit omega (110 aa).

This sequence belongs to the RNA polymerase subunit omega family. As to quaternary structure, the RNAP catalytic core consists of 2 alpha, 1 beta, 1 beta' and 1 omega subunit. When a sigma factor is associated with the core the holoenzyme is formed, which can initiate transcription.

It catalyses the reaction RNA(n) + a ribonucleoside 5'-triphosphate = RNA(n+1) + diphosphate. In terms of biological role, promotes RNA polymerase assembly. Latches the N- and C-terminal regions of the beta' subunit thereby facilitating its interaction with the beta and alpha subunits. This Nocardioides sp. (strain ATCC BAA-499 / JS614) protein is DNA-directed RNA polymerase subunit omega.